The primary structure comprises 158 residues: Transcriptional repressor NrdR (158 aa).

Residues 3-34 (CPYCQSEDTQVKDSRPAEDGAVIRRRRVCSVC) fold into a zinc finger. The 91-residue stretch at 49-139 (LMVVKKSGRR…VYRNFSKAVD (91 aa)) folds into the ATP-cone domain.

This sequence belongs to the NrdR family. Requires Zn(2+) as cofactor.

Its function is as follows. Negatively regulates transcription of bacterial ribonucleotide reductase nrd genes and operons by binding to NrdR-boxes. This is Transcriptional repressor NrdR from Brucella abortus (strain S19).